The chain runs to 301 residues: Multifunctional dioxygenase ausE (301 aa).

Residues R72 and Q127 each contribute to the substrate site. 2 residues coordinate Fe cation: H130 and D132. T167 contacts substrate. H214 is a binding site for Fe cation. Residue R226 coordinates substrate.

The protein belongs to the PhyH family. Homodimer. Fe cation is required as a cofactor.

It carries out the reaction preaustinoid A1 + 2-oxoglutarate + O2 = preaustinoid A2 + succinate + CO2 + H2O. The enzyme catalyses preaustinoid A2 + 2-oxoglutarate + O2 = preaustinoid A3 + succinate + CO2 + H2O. It catalyses the reaction berkeleyone A + 2-oxoglutarate + O2 = preaustinoid A + succinate + CO2 + H2O. It participates in secondary metabolite biosynthesis; terpenoid biosynthesis. Functionally, multifunctional dioxygenase; part of the gene cluster A that mediates the biosynthesis of the fungal meroterpenoid acetoxydehydroaustin. The first step of the pathway is the synthesis of 3,5-dimethylorsellinic acid by the polyketide synthase ausA. 3,5-dimethylorsellinic acid is then prenylated by the polyprenyl transferase ausN. Further epoxidation by the FAD-dependent monooxygenase ausM and cyclization by the probable terpene cyclase ausL lead to the formation of protoaustinoid A. Protoaustinoid A is then oxidized to spiro-lactone preaustinoid A3 by the combined action of the FAD-binding monooxygenases ausB and ausC, and the dioxygenase ausE. Acid-catalyzed keto-rearrangement and ring contraction of the tetraketide portion of preaustinoid A3 by ausJ lead to the formation of preaustinoid A4. The aldo-keto reductase ausK, with the help of ausH, is involved in the next step by transforming preaustinoid A4 into isoaustinone which is in turn hydroxylated by the P450 monooxygenase ausI to form austinolide. The cytochrome P450 monooxygenase ausG then modifies austinolide to austinol. Austinol is further acetylated to austin by the O-acetyltransferase ausP, which spontaneously changes to dehydroaustin. The cytochrome P450 monooxygenase then converts dehydroaustin is into 7-dehydrodehydroaustin. The hydroxylation catalyzed by ausR permits the second O-acetyltransferase ausQ to add an additional acetyl group to the molecule, leading to the formation of acetoxydehydroaustin. Due to genetic rearrangements of the clusters and the subsequent loss of some enzymes, the end product of the Penicillium brasilianum austinoid biosynthesis clusters is acetoxydehydroaustin. This chain is Multifunctional dioxygenase ausE, found in Penicillium brasilianum.